The following is a 204-amino-acid chain: CLAVATA3/ESR (CLE)-related protein 1 (204 aa).

The signal sequence occupies residues 1 to 21 (MAKNAMLCLLILSVVLALAFA). The interval 21-83 (ATNEKDDKEA…SNQLQNAYRM (63 aa)) is required for secretion from the host cytoplasm to the host apoplasm. Asparagine 32 carries N-linked (GlcNAc...) asparagine glycosylation. Residues 116-204 (RNTGMKPQSY…TPGVPDRQHR (89 aa)) are disordered. Basic and acidic residues-rich tracts occupy residues 139-151 (LHNR…EQKR), 160-172 (LHNR…EQKR), and 181-193 (LHNR…EQKR). Propeptides (removed in mature form) lie at residues 142-150 (REKILEEQK), 163-171 (REKTLEEQK), and 184-192 (REKTLEEQK).

It belongs to the CLV3/ESR signal peptide family. In terms of processing, preprocessing of the precursor by host proteases leads first to the production of 21-mer CLE-containing peptides (Arg-130 to Lys-150, Arg-151 to Lys-171 and Arg-172 to Lys-192) followed by an ultimate C-term trimming to give the mature 12-mer CLE1-1 peptide. In terms of tissue distribution, highly expressed exclusively within the dorsal esophageal gland cell during syncytium formation in host plants.

The protein localises to the secreted. It localises to the host cytoplasm. The protein resides in the host extracellular space. Its subcellular location is the extracellular space. It is found in the apoplast. Functionally, mimics host plant CLE extracellular signal peptides that regulate cell fate. May play a role in the differentiation or division of feeding cells (syncytia) induced in plant roots during infection. The chain is CLAVATA3/ESR (CLE)-related protein 1 from Globodera rostochiensis (Golden nematode worm).